A 351-amino-acid polypeptide reads, in one-letter code: Cytochrome c biogenesis protein CcsA (351 aa).

8 helical membrane passes run 17–37 (VLFLTMLLYWIGAAFPGLPAI), 38–58 (NALGTAGMAIANLSIATLLGA), 68–88 (LSNLYESLFFLSWGITTVHLI), 97–117 (LVGVFTTPVAMGIVAFATLTL), 143–163 (MMLSYSALMVGSLLAIAFLVI), 259–279 (IIGLGFPLLTIGIIAGAVWAN), 286–306 (WSWDPKETWALITWLVFAAYL), and 320–340 (AILAASGFVVVWICYLGVNLL).

The protein belongs to the CcmF/CycK/Ccl1/NrfE/CcsA family. May interact with ccs1.

Its subcellular location is the cellular thylakoid membrane. Required during biogenesis of c-type cytochromes (cytochrome c6 and cytochrome f) at the step of heme attachment. This is Cytochrome c biogenesis protein CcsA from Nostoc sp. (strain PCC 7120 / SAG 25.82 / UTEX 2576).